We begin with the raw amino-acid sequence, 315 residues long: Aspartate carbamoyltransferase catalytic subunit (315 aa).

2 residues coordinate carbamoyl phosphate: R65 and T66. K93 contacts L-aspartate. Carbamoyl phosphate is bound by residues R115, H145, and Q148. L-aspartate is bound by residues R179 and R234. Residues G275 and P276 each contribute to the carbamoyl phosphate site.

The protein belongs to the aspartate/ornithine carbamoyltransferase superfamily. ATCase family. As to quaternary structure, heterododecamer (2C3:3R2) of six catalytic PyrB chains organized as two trimers (C3), and six regulatory PyrI chains organized as three dimers (R2).

The enzyme catalyses carbamoyl phosphate + L-aspartate = N-carbamoyl-L-aspartate + phosphate + H(+). It participates in pyrimidine metabolism; UMP biosynthesis via de novo pathway; (S)-dihydroorotate from bicarbonate: step 2/3. Its function is as follows. Catalyzes the condensation of carbamoyl phosphate and aspartate to form carbamoyl aspartate and inorganic phosphate, the committed step in the de novo pyrimidine nucleotide biosynthesis pathway. The protein is Aspartate carbamoyltransferase catalytic subunit of Xanthomonas campestris pv. campestris (strain 8004).